We begin with the raw amino-acid sequence, 403 residues long: MSATLASPLRALLRLGLIPQIVIGIALGVGVAIVWPDAATSVALLGQVFISALKAVAPILVFLLVMTAIANHRRGQPTHIRGVLLLYVVGTLCAALVAVLASFIFPTSLVIDAPQASGEPPGGIAEILRNLLLNVVDNPVNALLNANFVGILAWAMGLGMMLRGASETTLVVLNAFSDAVSSIVQLVIRCAPLGIFGLVAGTLADTGLNALLDYAHLLAVIVGCMLFVALVTNPLIVFLATRRNPYPLVFACLRGSAITAFFTRSSAANIPVNMELCKRLDLHPDTYSISIPLGATINMAGAAVTISVITLAATHTLGIGVDFATALLLCVVASLAACGVSGVAGGSLLLIPMAASLFGISPDVAMQVVAIGFVISVVQDATETALNSSTDVLFTAAACRARR.

10 helical membrane passes run 15–35 (LGLI…AIVW), 49–69 (FISA…MTAI), 85–105 (LLYV…SFIF), 142–162 (ALLN…GMML), 183–203 (IVQL…AGTL), 218–238 (LAVI…LIVF), 246–268 (YPLV…SSAA), 289–309 (ISIP…ISVI), 317–337 (LGIG…SLAA), and 362–382 (PDVA…QDAT).

It belongs to the dicarboxylate/amino acid:cation symporter (DAACS) (TC 2.A.23) family.

It localises to the cell inner membrane. The enzyme catalyses L-serine(in) + Na(+)(in) = L-serine(out) + Na(+)(out). The catalysed reaction is L-threonine(in) + Na(+)(in) = L-threonine(out) + Na(+)(out). Involved in the import of serine and threonine into the cell, with the concomitant import of sodium (symport system). In Chromohalobacter salexigens (strain ATCC BAA-138 / DSM 3043 / CIP 106854 / NCIMB 13768 / 1H11), this protein is Serine/threonine transporter SstT.